The sequence spans 930 residues: Zn(2)-C6 fungal-type transcription factor FTF1c (930 aa).

Residues 137 to 164 constitute a DNA-binding region (zn(2)-C6 fungal-type); that stretch reads CIPCRRKKIRCSGEKPACEHCLRSYIPC.

It is found in the nucleus. In terms of biological role, zn(2)-C6 fungal-type transcription factor that has a role in the establishment of the fungus within the plant and/or the progress of the disease. Regulates the expression of virulence factors such as SIX1 and SIX6. This is Zn(2)-C6 fungal-type transcription factor FTF1c from Fusarium oxysporum f. sp. lycopersici (strain 4287 / CBS 123668 / FGSC 9935 / NRRL 34936) (Fusarium vascular wilt of tomato).